The primary structure comprises 367 residues: Serine/threonine-protein phosphatase 2A activator 2 (367 aa).

The protein belongs to the PTPA-type PPIase family.

Its subcellular location is the cytoplasm. The catalysed reaction is [protein]-peptidylproline (omega=180) = [protein]-peptidylproline (omega=0). Its function is as follows. PPIases accelerate the folding of proteins. It catalyzes the cis-trans isomerization of proline imidic peptide bonds in oligopeptides. Acts as a regulatory subunit for PP2A-like phosphatases modulating their activity or substrate specificity, probably by inducing a conformational change in the catalytic subunit, a direct target of the PPIase. Can reactivate inactive phosphatase PP2A-phosphatase methylesterase complexes (PP2Ai) in presence of ATP and Mg(2+) by dissociating the inactive form from the complex. The polypeptide is Serine/threonine-protein phosphatase 2A activator 2 (RRD2) (Debaryomyces hansenii (strain ATCC 36239 / CBS 767 / BCRC 21394 / JCM 1990 / NBRC 0083 / IGC 2968) (Yeast)).